We begin with the raw amino-acid sequence, 199 residues long: Protein GrpE (199 aa).

The disordered stretch occupies residues 1–40; the sequence is MEKKKHGTNSISEALKVKAAVEQETATPEPTPQSETESAD. The span at 24–36 shows a compositional bias: polar residues; it reads ETATPEPTPQSET.

It belongs to the GrpE family. As to quaternary structure, homodimer.

The protein resides in the cytoplasm. Functionally, participates actively in the response to hyperosmotic and heat shock by preventing the aggregation of stress-denatured proteins, in association with DnaK and GrpE. It is the nucleotide exchange factor for DnaK and may function as a thermosensor. Unfolded proteins bind initially to DnaJ; upon interaction with the DnaJ-bound protein, DnaK hydrolyzes its bound ATP, resulting in the formation of a stable complex. GrpE releases ADP from DnaK; ATP binding to DnaK triggers the release of the substrate protein, thus completing the reaction cycle. Several rounds of ATP-dependent interactions between DnaJ, DnaK and GrpE are required for fully efficient folding. This chain is Protein GrpE, found in Geotalea uraniireducens (strain Rf4) (Geobacter uraniireducens).